Here is a 603-residue protein sequence, read N- to C-terminus: Shugoshin (603 aa).

A coiled-coil region spans residues 11 to 74 (HIQELQNILD…NVQLRSQVSL (64 aa)). Disordered regions lie at residues 112 to 164 (ESLP…RSST) and 201 to 227 (NEIDTNNVNNDNLLSPIPHKKRKSNRR). Low complexity-rich tracts occupy residues 146-157 (SVSTGSAHSTSS) and 201-214 (NEIDTNNVNNDNLL). The span at 218–227 (PHKKRKSNRR) shows a compositional bias: basic residues. Residues 304-325 (KQDILDETEKRDTAVNQKKKLE) are a coiled coil. The segment at 331 to 399 (PVEELSSSKN…ESVDFDRPRR (69 aa)) is disordered. A compositionally biased stretch (basic residues) spans 362 to 376 (KVKHSMKSRKPKKNK). A coiled-coil region spans residues 431-451 (NIQDLQVKYKKSKKVLEKELK). Over residues 455 to 467 (KAMKSPKKNEKTF) the composition is skewed to basic and acidic residues. 2 disordered regions span residues 455–519 (KAMK…HSSF) and 583–603 (HNDTNKSSPKTYRSRSRKNKA). Positions 483–512 (RPSSTHSTSSVDAECSHNNSHSENINSSIN) are enriched in low complexity. Positions 583-593 (HNDTNKSSPKT) are enriched in polar residues. Residues 594 to 603 (YRSRSRKNKA) are compositionally biased toward basic residues.

It belongs to the shugoshin family.

The protein localises to the nucleus. It localises to the chromosome. Its subcellular location is the centromere. Its function is as follows. Plays a central role in chromosome cohesion during cell division by preventing premature dissociation of cohesin complex from centromeres after prophase, when most of cohesin complex dissociates from chromosomes arms. The sequence is that of Shugoshin (SGO1) from Candida glabrata (strain ATCC 2001 / BCRC 20586 / JCM 3761 / NBRC 0622 / NRRL Y-65 / CBS 138) (Yeast).